We begin with the raw amino-acid sequence, 1161 residues long: PAN2-PAN3 deadenylation complex catalytic subunit pan2 (1161 aa).

WD repeat units lie at residues 20–59 (GLPT…RYTS), 102–145 (AHEE…DKLQ), and 276–315 (ANVS…HFNE). The segment at 316 to 452 (MSKEVEFADV…GAKLNGEAED (137 aa)) is linker. The USP domain occupies 453-822 (DPLLKYSNVE…IPCVLAYQAR (370 aa)). Residues 871 to 1049 (VALDTEFVDL…VEDARMALRL (179 aa)) form the Exonuclease domain. Residues aspartate 874, glutamate 876, aspartate 983, and aspartate 1042 each coordinate a divalent metal cation. Residues 1094–1161 (GTAVTMQNNS…GDFFGGSPLK (68 aa)) form a disordered region. Polar residues predominate over residues 1097-1110 (VTMQNNSGRNTPST). Over residues 1116–1129 (AAAAAATTSAPATP) the composition is skewed to low complexity. The span at 1145–1155 (TFGGPGTGDFF) shows a compositional bias: gly residues.

It belongs to the peptidase C19 family. PAN2 subfamily. As to quaternary structure, forms a heterotrimer with an asymmetric homodimer of the regulatory subunit pan3 to form the poly(A)-nuclease (PAN) deadenylation complex. A divalent metal cation serves as cofactor.

It localises to the cytoplasm. It catalyses the reaction Exonucleolytic cleavage of poly(A) to 5'-AMP.. With respect to regulation, positively regulated by the regulatory subunit pan3. Catalytic subunit of the poly(A)-nuclease (PAN) deadenylation complex, one of two cytoplasmic mRNA deadenylases involved in mRNA turnover. PAN specifically shortens poly(A) tails of RNA and the activity is stimulated by poly(A)-binding protein pab1. PAN deadenylation is followed by rapid degradation of the shortened mRNA tails by the CCR4-NOT complex. Deadenylated mRNAs are then degraded by two alternative mechanisms, namely exosome-mediated 3'-5' exonucleolytic degradation, or deadenylation-dependent mRNA decaping and subsequent 5'-3' exonucleolytic degradation by xrn1. May also be involved in post-transcriptional maturation of mRNA poly(A) tails. This chain is PAN2-PAN3 deadenylation complex catalytic subunit pan2, found in Aspergillus clavatus (strain ATCC 1007 / CBS 513.65 / DSM 816 / NCTC 3887 / NRRL 1 / QM 1276 / 107).